A 763-amino-acid polypeptide reads, in one-letter code: Elongation factor G, mitochondrial (763 aa).

Residues 1–52 constitute a mitochondrion transit peptide; it reads MFMRLKVLEMNSIRRQTLLRQFTNVYNVVSRSARLCSQAIPKRLFYSTGSRA. Residues 60 to 347 form the tr-type G domain; that stretch reads SRLRNIGISA…AVCDYLPNPS (288 aa). GTP-binding positions include 69-76, 145-149, and 199-202; these read AHIDSGKT, DTPGH, and NKMD.

Belongs to the TRAFAC class translation factor GTPase superfamily. Classic translation factor GTPase family. EF-G/EF-2 subfamily.

The protein resides in the mitochondrion. It participates in protein biosynthesis; polypeptide chain elongation. Its function is as follows. Mitochondrial GTPase that catalyzes the GTP-dependent ribosomal translocation step during translation elongation. During this step, the ribosome changes from the pre-translocational (PRE) to the post-translocational (POST) state as the newly formed A-site-bound peptidyl-tRNA and P-site-bound deacylated tRNA move to the P and E sites, respectively. Catalyzes the coordinated movement of the two tRNA molecules, the mRNA and conformational changes in the ribosome. This chain is Elongation factor G, mitochondrial (mef1), found in Schizosaccharomyces japonicus (strain yFS275 / FY16936) (Fission yeast).